The chain runs to 147 residues: Fluoride-specific ion channel FluC 1 (147 aa).

4 consecutive transmembrane segments (helical) span residues 29–49 (YVYIFIGGALGALLRYLISFL), 61–81 (IANLTGAFVMGLLTALTIAFF), 90–110 (AITTGFLGALTTFSTFQLELI), and 118–138 (FITLLLYAVTSYVFGILLCYV). Residues Gly-97 and Thr-100 each contribute to the Na(+) site.

It belongs to the fluoride channel Fluc/FEX (TC 1.A.43) family.

Its subcellular location is the cell membrane. It carries out the reaction fluoride(in) = fluoride(out). With respect to regulation, na(+) is not transported, but it plays an essential structural role and its presence is essential for fluoride channel function. Its function is as follows. Fluoride-specific ion channel. Important for reducing fluoride concentration in the cell, thus reducing its toxicity. This chain is Fluoride-specific ion channel FluC 1, found in Staphylococcus aureus (strain Mu50 / ATCC 700699).